The following is a 527-amino-acid chain: MKIPLLGLLLLISLVGSPTRAEEGPVCPKTETLSRASFPEGFMFGTATAAFQVEGAVNEGCRGPSLWDIYTKKFPHRVKNHNADEAVDFYHRYKEDIQLMKKLNTDGFRLSISWPRIFPHGRMEKGISKEGVQFYHDLIDELLKNDITPLVTVFHWDTPADLEDEYGGFLSERIVPDFVEYANFTFHEYGDKVKNWITFNEPWVFSRSGYDVGKKAPGRCSPYVKEFGKLCQDGRSGFEPYVVSHNLLVGHAEAVDAFRKCEKCKGGKIGIAHSPAWFEPEDVEGGQATVNRVLDFVIGWHLDPTTFGDYPQSMKDAVGSRLPRFTKAQKAKLKDSTDFVGINYYTSFFAKADQKVDSRNPTWATDALVEFEPKTVDGSIKIGSQPNTAKMAVYAKGLRKLMKYIKDRYNSPEIIITENGYGEDLGDKDTDLSVALNDHNRKYYLQRHLLALNEAICEDKVNVTSYFLWSLMDNFEWQDGYTARFGVYYIDFKNNLTRMEKESAKWLSEFLKPGLKPSKSSKLHEEL.

An N-terminal signal peptide occupies residues methionine 1–alanine 21. The a beta-D-glucoside site is built by glutamine 52 and histidine 155. A glycan (N-linked (GlcNAc...) asparagine) is linked at asparagine 183. A beta-D-glucoside is bound at residue asparagine 200 to glutamate 201. Glutamate 201 (proton donor) is an active-site residue. Cysteine 220 and cysteine 231 are disulfide-bonded. Residues tyrosine 345 and glutamate 418 each coordinate a beta-D-glucoside. Catalysis depends on glutamate 418, which acts as the Nucleophile. N-linked (GlcNAc...) asparagine glycosylation is present at asparagine 462. A beta-D-glucoside-binding positions include tryptophan 469, glutamate 476–tryptophan 477, and phenylalanine 485. The N-linked (GlcNAc...) asparagine glycan is linked to asparagine 495. The Prevents secretion from ER signature appears at histidine 524–leucine 527.

Belongs to the glycosyl hydrolase 1 family.

Its subcellular location is the endoplasmic reticulum lumen. The enzyme catalyses Hydrolysis of terminal, non-reducing beta-D-glucosyl residues with release of beta-D-glucose.. The protein is Beta-glucosidase 19 of Arabidopsis thaliana (Mouse-ear cress).